A 377-amino-acid polypeptide reads, in one-letter code: DNA-directed RNA polymerase subunit alpha (377 aa).

The alpha N-terminal domain (alpha-NTD) stretch occupies residues 1 to 259 (MSDSSHNLLY…KHFSVFEKMD (259 aa)). The alpha C-terminal domain (alpha-CTD) stretch occupies residues 276–377 (KDDILHKLVL…KIRSSKNTKG (102 aa)).

It belongs to the RNA polymerase alpha chain family. Homodimer. The RNAP catalytic core consists of 2 alpha, 1 beta, 1 beta' and 1 omega subunit. When a sigma factor is associated with the core the holoenzyme is formed, which can initiate transcription.

It catalyses the reaction RNA(n) + a ribonucleoside 5'-triphosphate = RNA(n+1) + diphosphate. DNA-dependent RNA polymerase catalyzes the transcription of DNA into RNA using the four ribonucleoside triphosphates as substrates. The protein is DNA-directed RNA polymerase subunit alpha of Chlamydia trachomatis serovar D (strain ATCC VR-885 / DSM 19411 / UW-3/Cx).